The following is a 461-amino-acid chain: Smoothelin-like protein 2 (461 aa).

The stretch at 55–88 (PLARTVADLQRDNQRLQAQLERLTRQVEALGLAS) forms a coiled coil. Disordered stretches follow at residues 87–193 (ASGM…LRLP) and 227–248 (LNPS…KNSS). Pro residues predominate over residues 94-107 (PGTPGTPSPPPAPG). A Phosphothreonine modification is found at threonine 96. Phosphoserine occurs at positions 101, 129, and 134. The span at 134–147 (SLDHDEASESEMRK) shows a compositional bias: basic and acidic residues. 2 positions are modified to phosphoserine: serine 256 and serine 269. A disordered region spans residues 260-307 (AVTASKHSNSPPLVTPPQSPVSPQPPAITQVHRQGERRRELVRSQTLP). The span at 272–285 (LVTPPQSPVSPQPP) shows a compositional bias: pro residues. Threonine 274 is modified (phosphothreonine). Serine 278 is modified (phosphoserine). Positions 292 to 301 (RQGERRRELV) are enriched in basic and acidic residues. Serine 344 carries the post-translational modification Phosphoserine. One can recognise a Calponin-homology (CH) domain in the interval 351–458 (SSIKQILLEW…YVQSLYNHLR (108 aa)).

Belongs to the smoothelin family.

The chain is Smoothelin-like protein 2 (SMTNL2) from Homo sapiens (Human).